We begin with the raw amino-acid sequence, 299 residues long: ATP phosphoribosyltransferase (299 aa).

Belongs to the ATP phosphoribosyltransferase family. Long subfamily. In terms of assembly, equilibrium between an active dimeric form, an inactive hexameric form and higher aggregates. Interconversion between the various forms is largely reversible and is influenced by the natural substrates and inhibitors of the enzyme. Mg(2+) is required as a cofactor.

Its subcellular location is the cytoplasm. It catalyses the reaction 1-(5-phospho-beta-D-ribosyl)-ATP + diphosphate = 5-phospho-alpha-D-ribose 1-diphosphate + ATP. Its pathway is amino-acid biosynthesis; L-histidine biosynthesis; L-histidine from 5-phospho-alpha-D-ribose 1-diphosphate: step 1/9. Feedback inhibited by histidine. Functionally, catalyzes the condensation of ATP and 5-phosphoribose 1-diphosphate to form N'-(5'-phosphoribosyl)-ATP (PR-ATP). Has a crucial role in the pathway because the rate of histidine biosynthesis seems to be controlled primarily by regulation of HisG enzymatic activity. The chain is ATP phosphoribosyltransferase from Klebsiella pneumoniae (strain 342).